Consider the following 482-residue polypeptide: Cardiolipin synthase (482 aa).

The next 2 helical transmembrane spans lie at 4 to 24 (LAYL…VTVF) and 34 to 54 (WAWL…YLIF). PLD phosphodiesterase domains are found at residues 217-244 (LNYR…GDEY) and 395-422 (DNGF…DFRS). Residues His-222, Lys-224, Asp-229, His-400, Lys-402, and Asp-407 contribute to the active site.

It belongs to the phospholipase D family. Cardiolipin synthase subfamily.

Its subcellular location is the cell membrane. It catalyses the reaction 2 a 1,2-diacyl-sn-glycero-3-phospho-(1'-sn-glycerol) = a cardiolipin + glycerol. Catalyzes the reversible phosphatidyl group transfer from one phosphatidylglycerol molecule to another to form cardiolipin (CL) (diphosphatidylglycerol) and glycerol. The polypeptide is Cardiolipin synthase (cls) (Listeria monocytogenes serotype 4b (strain CLIP80459)).